The sequence spans 311 residues: Olfactory receptor 4S2 (311 aa).

The Extracellular portion of the chain corresponds to 1-23 (MEKINNVTEFIFWGLSQSPEIEK). Residue Asn6 is glycosylated (N-linked (GlcNAc...) asparagine). The helical transmembrane segment at 24–47 (VCFVVFSFFYIIILLGNLLIMLTV) threads the bilayer. The Cytoplasmic segment spans residues 48-55 (CLSNLFKS). A helical membrane pass occupies residues 56-77 (PMYFFLSFLSFVDICYSSVTAP). The Extracellular portion of the chain corresponds to 78–98 (KMIVDLLAKDKTISYVGCMLQ). Cys95 and Cys187 are joined by a disulfide. A helical membrane pass occupies residues 99-118 (LFGVHFFGCTEIFILTVMAY). At 119 to 137 (DRYVAICKPLHYMTIMNRE) the chain is on the cytoplasmic side. The helical transmembrane segment at 138–156 (TCNKMLLGTWVGGFLHSII) threads the bilayer. Residues 157-193 (QVALVVQLPFCGPNEIDHYFCDVHPVLKLACTETYIV) are Extracellular-facing. Residues 194–217 (GVVVTANSGTIALGSFVILLISYS) traverse the membrane as a helical segment. Residues 218–233 (IILVSLRKQSAEGRRK) are Cytoplasmic-facing. The chain crosses the membrane as a helical span at residues 234–256 (ALSTCGSHIAMVVIFFGPCTFMY). Topologically, residues 257-267 (MRPDTTFSEDK) are extracellular. The chain crosses the membrane as a helical span at residues 268 to 287 (MVAVFYTIITPMLNPLIYTL). At 288–311 (RNAEVKNAMKKLWGRNVFLEAKGK) the chain is on the cytoplasmic side.

The protein belongs to the G-protein coupled receptor 1 family.

It localises to the cell membrane. Odorant receptor. The polypeptide is Olfactory receptor 4S2 (OR4S2) (Homo sapiens (Human)).